A 359-amino-acid chain; its full sequence is AA9 family lytic polysaccharide monooxygenase C (359 aa).

A signal peptide spans 1 to 16; it reads MKTGSILAALVASASA. 2 residues coordinate Cu(2+): His17 and His99. 2 cysteine pairs are disulfide-bonded: Cys55/Cys185 and Cys155/Cys243. His171 and Gln180 together coordinate O2. Position 182 (Tyr182) interacts with Cu(2+). N-linked (GlcNAc...) asparagine glycans are attached at residues Asn189 and Asn284. The interval 244–320 is disordered; it reads PAGGSGGSSP…NPQPTNGGNS (77 aa). Low complexity predominate over residues 251-296; the sequence is SSPAPATTASTPKPTSASAPKPVSTTASTPKPTNGSGSGTGAAHST. Polar residues predominate over residues 307–319; the sequence is TKASNPQPTNGGN. The region spanning 323–358 is the CBM1 domain; it reads RAAALYGQCGGKGWTGPTSCASGTCKFSNDWYSQCL.

The protein belongs to the polysaccharide monooxygenase AA9 family. Requires Cu(2+) as cofactor.

It is found in the secreted. The enzyme catalyses [(1-&gt;4)-beta-D-glucosyl]n+m + reduced acceptor + O2 = 4-dehydro-beta-D-glucosyl-[(1-&gt;4)-beta-D-glucosyl]n-1 + [(1-&gt;4)-beta-D-glucosyl]m + acceptor + H2O.. Activity in inhibited by excessive amounts of H(2)O(2). Functionally, lytic polysaccharide monooxygenase (LPMO) that depolymerizes crystalline and amorphous polysaccharides via the oxidation of scissile alpha- or beta-(1-4)-glycosidic bonds, yielding C4 oxidation products. Catalysis by LPMOs requires the reduction of the active-site copper from Cu(II) to Cu(I) by a reducing agent and H(2)O(2) or O(2) as a cosubstrate. Degrades various hemicelluloses, in particular xyloglucan. Active on tamarind xyloglucan and konjac glucomannan. Acts on the glucose backbone of xyloglucan, accepting various substitutions (xylose, galactose) in almost allpositions. In contrast to all previously characterized LPMOs, which are active only on polysaccharides, is able to cleave soluble cello-oligosaccharides as short as a tetramer. The cello-oligosaccharide products released by this enzyme contain a C4 gemdiol/keto group at the non-reducing end. Binds to the inner wood cell wall layer and consumes enzymatically generated H(2)O(2). The protein is AA9 family lytic polysaccharide monooxygenase C (gh61-3) of Neurospora crassa (strain ATCC 24698 / 74-OR23-1A / CBS 708.71 / DSM 1257 / FGSC 987).